The primary structure comprises 740 residues: Anaphase-promoting complex subunit 5 (740 aa).

S180 carries the post-translational modification Phosphoserine. TPR repeat units follow at residues 194 to 234, 235 to 285, 286 to 322, 323 to 363, 364 to 403, 404 to 451, 452 to 485, 486 to 525, 526 to 565, 566 to 605, 606 to 645, 646 to 681, and 682 to 721; these read QKQA…FNPD, FAEA…GRSL, RYAALNLAALHCRFGHYQQAELALQEAIRIAQESNDH, VCLQ…YLAS, LGIQSLVQQRAFAGKTANKLMDALKDSDLLHWKHSLSELI, DISI…TESF, AVALCHLAELHAEQGCFAAAGEVLKHLKDRFPPN, SQHAQLWMLCDQKIQFDRAMNDGKFHLADSLVTGITALNG, IEGVYRKAVVLQAQNQMTEAHKLLQKLLTYCQKLKNTEMV, ISVLLSVAELYWRSSSPTIAMPVLLEALALSKEYRLQYLA, SETVLNLAYAQLILGIPEQALTLLHMAIEPILADGAVLDK, GRAMFLVSKCQVASAASYDPVKKAEALEAAIQNLSE, and AKNYFAQVDCRERIRDVAYFQARLYHALGKTQERNHCAMI. T217 is subject to Phosphothreonine.

Belongs to the APC5 family. As to quaternary structure, the mammalian APC/C is composed at least of 14 distinct subunits ANAPC1, ANAPC2, CDC27/APC3, ANAPC4, ANAPC5, CDC16/APC6, ANAPC7, CDC23/APC8, ANAPC10, ANAPC11, CDC26/APC12, ANAPC13, ANAPC15 and ANAPC16 that assemble into a complex of at least 19 chains with a combined molecular mass of around 1.2 MDa; APC/C interacts with FZR1 and FBXO5.

Its subcellular location is the nucleus. The protein resides in the cytoplasm. It is found in the cytoskeleton. The protein localises to the spindle. It participates in protein modification; protein ubiquitination. Functionally, component of the anaphase promoting complex/cyclosome (APC/C), a cell cycle-regulated E3 ubiquitin ligase that controls progression through mitosis and the G1 phase of the cell cycle. The APC/C complex acts by mediating ubiquitination and subsequent degradation of target proteins: it mainly mediates the formation of 'Lys-11'-linked polyubiquitin chains and, to a lower extent, the formation of 'Lys-48'- and 'Lys-63'-linked polyubiquitin chains. The APC/C complex catalyzes assembly of branched 'Lys-11'-/'Lys-48'-linked branched ubiquitin chains on target proteins. In Mus musculus (Mouse), this protein is Anaphase-promoting complex subunit 5 (Anapc5).